The sequence spans 188 residues: Nicotinamide-nucleotide adenylyltransferase (188 aa).

This sequence belongs to the archaeal NMN adenylyltransferase family.

Its subcellular location is the cytoplasm. It catalyses the reaction beta-nicotinamide D-ribonucleotide + ATP + H(+) = diphosphate + NAD(+). Its pathway is cofactor biosynthesis; NAD(+) biosynthesis; NAD(+) from nicotinamide D-ribonucleotide: step 1/1. This chain is Nicotinamide-nucleotide adenylyltransferase, found in Pyrococcus furiosus (strain ATCC 43587 / DSM 3638 / JCM 8422 / Vc1).